Reading from the N-terminus, the 880-residue chain is Tyrosine-protein kinase receptor TYRO3 (880 aa).

Positions 1 to 30 are cleaved as a signal peptide; the sequence is MALRRSMGWPGLRPLLLAGLASLLLPGSAA. 2 Ig-like C2-type domains span residues 31-118 and 129-209; these read AGLK…TKIS and PFFT…PAIV. The Extracellular portion of the chain corresponds to 31-419; it reads AGLKLMGAPV…QGPPHSRTSW (389 aa). 8 N-linked (GlcNAc...) asparagine glycosylation sites follow: Asn-53, Asn-75, Asn-181, Asn-220, Asn-230, Asn-283, Asn-356, and Asn-370. 2 disulfides stabilise this stretch: Cys-54–Cys-107 and Cys-150–Cys-193. 2 Fibronectin type-III domains span residues 217–310 and 315–406; these read APFN…TKGL and APQN…SHDH. Residues 420-440 traverse the membrane as a helical segment; the sequence is VPVVLGVLTALITAAALALIL. Residues 441-880 are Cytoplasmic-facing; the sequence is LRKRRKETRF…QQGLLPHSSC (440 aa). Residue Ser-456 is modified to Phosphoserine. A Protein kinase domain is found at 508–785; that stretch reads FTLGRMLGKG…LENILGHLSV (278 aa). ATP-binding positions include 514–522 and Lys-540; that span reads LGKGEFGSV. Catalysis depends on Asp-645, which acts as the Proton acceptor. Phosphotyrosine; by autocatalysis is present on residues Tyr-671, Tyr-675, Tyr-676, and Tyr-794. A disordered region spans residues 800–864; it reads AEQPTESGSP…QQPESPLNEN (65 aa). Ser-808 and Ser-859 each carry phosphoserine. A compositionally biased stretch (polar residues) spans 849-864; it reads SPGQLEQQPESPLNEN.

Belongs to the protein kinase superfamily. Tyr protein kinase family. AXL/UFO subfamily. Monomer and homodimer. Interacts (via N-terminus) with extracellular ligands TULP1 and GAS6. Interacts with PIK3R1; this interaction increases PI3-kinase activity. In terms of processing, autophosphorylated. In terms of tissue distribution, abundant in the brain and lower levels in other tissues.

The protein localises to the cell membrane. The enzyme catalyses L-tyrosyl-[protein] + ATP = O-phospho-L-tyrosyl-[protein] + ADP + H(+). In terms of biological role, receptor tyrosine kinase that transduces signals from the extracellular matrix into the cytoplasm by binding to several ligands including TULP1 or GAS6. Regulates many physiological processes including cell survival, migration and differentiation. Ligand binding at the cell surface induces dimerization and autophosphorylation of TYRO3 on its intracellular domain that provides docking sites for downstream signaling molecules. Following activation by ligand, interacts with PIK3R1 and thereby enhances PI3-kinase activity. Activates the AKT survival pathway, including nuclear translocation of NF-kappa-B and up-regulation of transcription of NF-kappa-B-regulated genes. TYRO3 signaling plays a role in various processes such as neuron protection from excitotoxic injury, platelet aggregation and cytoskeleton reorganization. Also plays an important role in inhibition of Toll-like receptors (TLRs)-mediated innate immune response by activating STAT1, which selectively induces production of suppressors of cytokine signaling SOCS1 and SOCS3. The sequence is that of Tyrosine-protein kinase receptor TYRO3 (Tyro3) from Mus musculus (Mouse).